We begin with the raw amino-acid sequence, 692 residues long: ABC transporter F family member 5 (692 aa).

A disordered region spans residues Glu64 to Ser95. Over residues Ser86–Ser95 the composition is skewed to polar residues. 2 ABC transporter domains span residues Val98–Asn356 and Val425–Leu640. ATP contacts are provided by residues Gly130 to Thr137 and Gly457 to Ser464. The tract at residues Ala644–Asn692 is disordered. A compositionally biased stretch (basic residues) spans Gln680–Asn692.

It belongs to the ABC transporter superfamily. ABCF family. EF3 (TC 3.A.1.121) subfamily.

The protein is ABC transporter F family member 5 (ABCF5) of Arabidopsis thaliana (Mouse-ear cress).